The primary structure comprises 697 residues: DNA ligase (697 aa).

Residues 41–45 (DPVYD), 90–91 (SL), and Glu129 contribute to the NAD(+) site. Lys131 (N6-AMP-lysine intermediate) is an active-site residue. Positions 152, 189, 308, and 332 each coordinate NAD(+). Residues Cys426, Cys429, Cys444, and Cys449 each coordinate Zn(2+). A BRCT domain is found at 617–697 (AANHHLTGST…ALQNMLRGST (81 aa)).

The protein belongs to the NAD-dependent DNA ligase family. LigA subfamily. Mg(2+) serves as cofactor. It depends on Mn(2+) as a cofactor.

The catalysed reaction is NAD(+) + (deoxyribonucleotide)n-3'-hydroxyl + 5'-phospho-(deoxyribonucleotide)m = (deoxyribonucleotide)n+m + AMP + beta-nicotinamide D-nucleotide.. Functionally, DNA ligase that catalyzes the formation of phosphodiester linkages between 5'-phosphoryl and 3'-hydroxyl groups in double-stranded DNA using NAD as a coenzyme and as the energy source for the reaction. It is essential for DNA replication and repair of damaged DNA. This chain is DNA ligase, found in Synechococcus sp. (strain CC9311).